The chain runs to 520 residues: Cytosol aminopeptidase (520 aa).

Lys-286 and Asp-291 together coordinate Zn(2+). Residue Lys-298 is part of the active site. Positions 309, 368, and 370 each coordinate Zn(2+). Arg-372 is a catalytic residue.

It belongs to the peptidase M17 family. In terms of assembly, homohexamer. It depends on Zn(2+) as a cofactor.

It localises to the cytoplasm. It carries out the reaction Release of an N-terminal amino acid, Xaa-|-Yaa-, in which Xaa is preferably Leu, but may be other amino acids including Pro although not Arg or Lys, and Yaa may be Pro. Amino acid amides and methyl esters are also readily hydrolyzed, but rates on arylamides are exceedingly low.. It catalyses the reaction Release of N-terminal proline from a peptide.. Presumably involved in the processing and regular turnover of intracellular proteins. Catalyzes the removal of unsubstituted N-terminal amino acids from various peptides. The polypeptide is Cytosol aminopeptidase (lap) (Dictyostelium discoideum (Social amoeba)).